Consider the following 300-residue polypeptide: Cation-efflux pump FieF (300 aa).

A helical membrane pass occupies residues 24-44; that stretch reads LLIKILAWWYTGSVSILAALV. Zn(2+) is bound by residues aspartate 45 and aspartate 49. The next 2 membrane-spanning stretches (helical) occupy residues 82–102 and 114–134; these read AALA…LTSI and PGVG…LVTF. Zn(2+)-binding residues include histidine 153 and aspartate 157. The next 2 membrane-spanning stretches (helical) occupy residues 156 to 176 and 178 to 198; these read SDVM…YGWH and ADAL…LRMG.

Belongs to the cation diffusion facilitator (CDF) transporter (TC 2.A.4) family. FieF subfamily. As to quaternary structure, homodimer.

It is found in the cell inner membrane. The enzyme catalyses Zn(2+)(in) + H(+)(out) = Zn(2+)(out) + H(+)(in). It catalyses the reaction Cd(2+)(in) + H(+)(out) = Cd(2+)(out) + H(+)(in). The catalysed reaction is Fe(2+)(in) + H(+)(out) = Fe(2+)(out) + H(+)(in). Its function is as follows. Divalent metal cation transporter which exports Zn(2+), Cd(2+) and possibly Fe(2+). May be involved in zinc and iron detoxification by efflux. The sequence is that of Cation-efflux pump FieF from Salmonella agona (strain SL483).